We begin with the raw amino-acid sequence, 121 residues long: ATP synthase epsilon chain (121 aa).

The protein belongs to the ATPase epsilon chain family. In terms of assembly, F-type ATPases have 2 components, CF(1) - the catalytic core - and CF(0) - the membrane proton channel. CF(1) has five subunits: alpha(3), beta(3), gamma(1), delta(1), epsilon(1). CF(0) has three main subunits: a, b and c.

It localises to the cell membrane. Functionally, produces ATP from ADP in the presence of a proton gradient across the membrane. The chain is ATP synthase epsilon chain from Mycolicibacterium vanbaalenii (strain DSM 7251 / JCM 13017 / BCRC 16820 / KCTC 9966 / NRRL B-24157 / PYR-1) (Mycobacterium vanbaalenii).